The following is a 537-amino-acid chain: Probable alpha-galactosidase A (537 aa).

An N-terminal signal peptide occupies residues 1-23 (MNQGTKSILLAATLAAIPWQVYG). Cys46 and Cys78 form a disulfide bridge. N-linked (GlcNAc...) asparagine glycans are attached at residues Asn49, Asn87, Asn93, and Asn123. An intrachain disulfide couples Cys126 to Cys156. Asp154 functions as the Nucleophile in the catalytic mechanism. Residue Asn203 is glycosylated (N-linked (GlcNAc...) asparagine). Asp212 functions as the Proton donor in the catalytic mechanism. 2 N-linked (GlcNAc...) asparagine glycosylation sites follow: Asn355 and Asn436. Residues 413–537 (CSSVVPTGLV…FGLPSGVQLS (125 aa)) form the Ricin B-type lectin domain. Intrachain disulfides connect Cys430–Cys444 and Cys469–Cys482. Asn491 carries N-linked (GlcNAc...) asparagine glycosylation.

Belongs to the glycosyl hydrolase 27 family.

The protein resides in the secreted. The catalysed reaction is Hydrolysis of terminal, non-reducing alpha-D-galactose residues in alpha-D-galactosides, including galactose oligosaccharides, galactomannans and galactolipids.. Its function is as follows. Hydrolyzes a variety of simple alpha-D-galactoside as well as more complex molecules such as oligosaccharides and polysaccharides. In Aspergillus niger (strain ATCC MYA-4892 / CBS 513.88 / FGSC A1513), this protein is Probable alpha-galactosidase A (aglA).